The chain runs to 162 residues: Endoribonuclease YbeY (162 aa).

His-126, His-130, and His-136 together coordinate Zn(2+).

It belongs to the endoribonuclease YbeY family. The cofactor is Zn(2+).

The protein localises to the cytoplasm. Its function is as follows. Single strand-specific metallo-endoribonuclease involved in late-stage 70S ribosome quality control and in maturation of the 3' terminus of the 16S rRNA. This chain is Endoribonuclease YbeY, found in Fusobacterium nucleatum subsp. nucleatum (strain ATCC 25586 / DSM 15643 / BCRC 10681 / CIP 101130 / JCM 8532 / KCTC 2640 / LMG 13131 / VPI 4355).